The chain runs to 471 residues: 8-amino-7-oxononanoate synthase (471 aa).

R40 contributes to the substrate binding site. 131–132 (GY) serves as a coordination point for pyridoxal 5'-phosphate. Position 156 (H156) interacts with substrate. S202, H230, and T258 together coordinate pyridoxal 5'-phosphate. The residue at position 261 (K261) is an N6-(pyridoxal phosphate)lysine. T377 serves as a coordination point for substrate. A disordered region spans residues 409–471 (SEGQTRREAE…LGAARRETAA (63 aa)).

Belongs to the class-II pyridoxal-phosphate-dependent aminotransferase family. BioF subfamily. As to quaternary structure, homodimer. It depends on pyridoxal 5'-phosphate as a cofactor.

It carries out the reaction 6-carboxyhexanoyl-[ACP] + L-alanine + H(+) = (8S)-8-amino-7-oxononanoate + holo-[ACP] + CO2. It participates in cofactor biosynthesis; biotin biosynthesis. Catalyzes the decarboxylative condensation of pimeloyl-[acyl-carrier protein] and L-alanine to produce 8-amino-7-oxononanoate (AON), [acyl-carrier protein], and carbon dioxide. This is 8-amino-7-oxononanoate synthase from Burkholderia ambifaria (strain ATCC BAA-244 / DSM 16087 / CCUG 44356 / LMG 19182 / AMMD) (Burkholderia cepacia (strain AMMD)).